The primary structure comprises 197 residues: TATA-box-binding protein (197 aa).

2 repeat units span residues 10 to 86 (IENI…VKLL) and 101 to 177 (IQNI…YNQL).

Belongs to the TBP family.

Its function is as follows. General factor that plays a role in the activation of archaeal genes transcribed by RNA polymerase. Binds specifically to the TATA box promoter element which lies close to the position of transcription initiation. The sequence is that of TATA-box-binding protein from Pyrobaculum neutrophilum (strain DSM 2338 / JCM 9278 / NBRC 100436 / V24Sta) (Thermoproteus neutrophilus).